Reading from the N-terminus, the 524-residue chain is 3-epi-6-deoxocathasterone 23-monooxygenase CYP90C1 (524 aa).

Residues 25-45 (YLVAGFLVLTAGILLRPWLWL) traverse the membrane as a helical segment. A heme-binding site is contributed by cysteine 463.

Belongs to the cytochrome P450 family. It depends on heme as a cofactor. As to expression, widely expressed.

It is found in the endoplasmic reticulum membrane. The enzyme catalyses 3-epi-6-deoxocathasterone + reduced [NADPH--hemoprotein reductase] + O2 = 6-deoxotyphasterol + oxidized [NADPH--hemoprotein reductase] + H2O + H(+). The catalysed reaction is (22S,24R)-22-hydroxy-5alpha-ergostan-3-one + reduced [NADPH--hemoprotein reductase] + O2 = 3-dehydro-6-deoxoteasterone + oxidized [NADPH--hemoprotein reductase] + H2O + H(+). It functions in the pathway plant hormone biosynthesis; brassinosteroid biosynthesis. Its function is as follows. Involved in brassinosteroid (BR) biosynthesis. Converts typhasterol (TY) to cathasterone (CS) and 6-deoxotyphasterol (6-deoxoTY) to 6-deoxocathasterone (6-deoxoCT). C-23 hydroxylase that converts directly (22S,24R)-22-hydroxy-5-alpha-ergostan-3-one and 3-epi-6-deoxocathasterone to 3-dehydro-6-deoxoteasterone (6-deoxo3DT, 6-deoxo3DHT) and 6-deoxotyphasterol (6-deoxoTY), respectively. These C-23 hydroxylation shortcuts bypass campestanol, 6-deoxocathasterone, and 6-deoxoteasterone (6-deoxoTE). Also catalyzes the conversion of cathasterone to teasterone (TE), (22S,24R)-22-hydroxyergost-4-en-3-one (22-OH-4-en-3-one) to (22R,23R)-22,23-dihydroxy-campest-4-en-3-one (22,23-diOH-4-en-3-one) and (22S)-22-hydroxycampesterol (22-OHCR) to (22R,23R)-22,23-dihydroxycampesterol (22,23-diOHCR). Required for the regulation of polar elongation of leaf cells. Required for the longitudinal elongation of floral organs. This is 3-epi-6-deoxocathasterone 23-monooxygenase CYP90C1 from Arabidopsis thaliana (Mouse-ear cress).